Reading from the N-terminus, the 314-residue chain is ATP synthase gamma chain (314 aa).

This sequence belongs to the ATPase gamma chain family. As to quaternary structure, F-type ATPases have 2 components, CF(1) - the catalytic core - and CF(0) - the membrane proton channel. CF(1) has five subunits: alpha(3), beta(3), gamma(1), delta(1), epsilon(1). CF(0) has three main subunits: a, b and c.

Its subcellular location is the cellular thylakoid membrane. Functionally, produces ATP from ADP in the presence of a proton gradient across the membrane. The gamma chain is believed to be important in regulating ATPase activity and the flow of protons through the CF(0) complex. The protein is ATP synthase gamma chain of Picosynechococcus sp. (strain ATCC 27264 / PCC 7002 / PR-6) (Agmenellum quadruplicatum).